A 315-amino-acid polypeptide reads, in one-letter code: Homoserine kinase (315 aa).

97 to 107 (PPARGLGSSAT) serves as a coordination point for ATP.

Belongs to the GHMP kinase family. Homoserine kinase subfamily.

It is found in the cytoplasm. It catalyses the reaction L-homoserine + ATP = O-phospho-L-homoserine + ADP + H(+). Its pathway is amino-acid biosynthesis; L-threonine biosynthesis; L-threonine from L-aspartate: step 4/5. Its function is as follows. Catalyzes the ATP-dependent phosphorylation of L-homoserine to L-homoserine phosphate. The polypeptide is Homoserine kinase (Prochlorococcus marinus (strain MIT 9515)).